A 474-amino-acid chain; its full sequence is Coronin-1C (474 aa).

WD repeat units follow at residues 25-70 (DDIR…GRID), 78-118 (GHTG…LTLS), 128-168 (GHSK…ALIN), 172-202 (MHSDMIYNVSWNRNGSLICTASKDKKVRVID), 215-249 (AHEGARPMRAIFLADGNVFTTGFSRMSERQLALWN), and 263-303 (DTSN…PYVH). Positions 436–474 (QNEAKLDEILKEIKSIKDTICNQDERISKLEQQMAKIAA) form a coiled coil. An N6-acetyllysine modification is found at K446.

Belongs to the WD repeat coronin family. Binds F-actin. Interacts with RCC2. Interacts preferentially with nucleotide-free and GDP-bound RAC1. Interacts with VIM (via head domain). Isoform 1 and isoform 2 appear as homotrimers, while isoform 3 seems to exist as monomers. Interacts with MICAL2; this interaction recruits MICAL2 to the actin filaments. In terms of tissue distribution, ubiquitous.

It localises to the cell membrane. The protein resides in the cell projection. Its subcellular location is the lamellipodium. The protein localises to the ruffle membrane. It is found in the cytoplasm. It localises to the cytoskeleton. The protein resides in the cell cortex. Its subcellular location is the endosome membrane. The protein localises to the sarcolemma. It is found in the myofibril. It localises to the sarcomere. The protein resides in the synapse. Functionally, plays a role in directed cell migration by regulating the activation and subcellular location of RAC1. Increases the presence of activated RAC1 at the leading edge of migrating cells. Required for normal organization of the cytoskeleton, including the actin cytoskeleton, microtubules and the vimentin intermediate filaments. Plays a role in endoplasmic reticulum-associated endosome fission: localizes to endosome membrane tubules and promotes recruitment of TMCC1, leading to recruitment of the endoplasmic reticulum to endosome tubules for fission. Endosome membrane fission of early and late endosomes is essential to separate regions destined for lysosomal degradation from carriers to be recycled to the plasma membrane. Required for normal cell proliferation, cell migration, and normal formation of lamellipodia. Required for normal distribution of mitochondria within cells. In terms of biological role, involved in myogenic differentiation. This is Coronin-1C from Homo sapiens (Human).